The following is a 412-amino-acid chain: Potassium channel, subfamily K, member 13 (412 aa).

At 1–21 (MACRSGCCCNSIGSFNEDNAR) the chain is on the cytoplasmic side. The helical transmembrane segment at 22 to 42 (FLMLALLIIIYLLCGAAVFSA) threads the bilayer. An intramembrane region (pore-forming) is located at residues 97 to 117 (WDFAGAFYFVGTVVSTIGFGM). K(+) contacts are provided by Thr-112, Ile-113, and Gly-114. The selectivity filter 1 stretch occupies residues 112–117 (TIGFGM). The helical transmembrane segment at 127-147 (IFLIFYGLIGCAATILFFNLF) threads the bilayer. The Cytoplasmic segment spans residues 148-198 (LERVITVIAFVLKFCHERRESRKAGPTQNCRRPSTDNRDRRTDSLAGWKPS). The chain crosses the membrane as a helical span at residues 199 to 219 (VYCVMLILGVAAILVSCCASA). An intramembrane region (pore-forming) is located at residues 229 to 249 (YLDALYFCFVAFSTIGFGDMV). K(+)-binding residues include Thr-242, Ile-243, Gly-244, and Phe-245. The interval 242-247 (TIGFGD) is selectivity filter 2. Residues 268–288 (LFILTGVCCIYSLFNVISIVI) traverse the membrane as a helical segment. Over 289 to 412 (KQVLNWLLRR…NRLAETSVDR (124 aa)) the chain is Cytoplasmic. The span at 374-386 (MANGHPRQSGSSS) shows a compositional bias: polar residues. The disordered stretch occupies residues 374-395 (MANGHPRQSGSSSRHNEFSGGV).

This sequence belongs to the two pore domain potassium channel (TC 1.A.1.8) family. In terms of assembly, homodimer. Heterodimer. In terms of tissue distribution, brain and heart.

It localises to the cell membrane. It catalyses the reaction K(+)(in) = K(+)(out). Its activity is regulated as follows. The channel conductance is activated by arachidonic acid and inhibited by Ba(2+) ions, volatile anesthetics such as halothane and antiarrhythmic drug mexiletine. Insensitive to extracellular pH change. K(+) channel that conducts outward rectifying tonic currents potentiated by purinergic signals. Homo- and heterodimerizes to form functional channels with distinct regulatory and gating properties. Contributes most of K(+) currents at the plasma membrane of resting microglia. Maintains a depolarized membrane potential required for proper ramified microglia morphology and phagocytosis, selectively mediating microglial pruning of presynaptic compartments at hippocampal excitatory synapses. Upon local release of ATP caused by neuronal injury or infection, it is potentiated by purinergic signaling and contributes to ATP-triggered K(+) efflux underlying microglial NLRP3 inflammasome assembly and IL1B release. This Danio rerio (Zebrafish) protein is Potassium channel, subfamily K, member 13.